Consider the following 296-residue polypeptide: Bifunctional protein FolD (296 aa).

NADP(+) is bound by residues 166 to 168 (GRS), Ser195, and Ile236.

The protein belongs to the tetrahydrofolate dehydrogenase/cyclohydrolase family. As to quaternary structure, homodimer.

It carries out the reaction (6R)-5,10-methylene-5,6,7,8-tetrahydrofolate + NADP(+) = (6R)-5,10-methenyltetrahydrofolate + NADPH. The enzyme catalyses (6R)-5,10-methenyltetrahydrofolate + H2O = (6R)-10-formyltetrahydrofolate + H(+). Its pathway is one-carbon metabolism; tetrahydrofolate interconversion. In terms of biological role, catalyzes the oxidation of 5,10-methylenetetrahydrofolate to 5,10-methenyltetrahydrofolate and then the hydrolysis of 5,10-methenyltetrahydrofolate to 10-formyltetrahydrofolate. The chain is Bifunctional protein FolD from Chlorobium limicola (strain DSM 245 / NBRC 103803 / 6330).